The chain runs to 238 residues: 1-(5-phosphoribosyl)-5-[(5-phosphoribosylamino)methylideneamino] imidazole-4-carboxamide isomerase (238 aa).

Catalysis depends on aspartate 8, which acts as the Proton acceptor. Catalysis depends on aspartate 129, which acts as the Proton donor.

This sequence belongs to the HisA/HisF family.

Its subcellular location is the cytoplasm. The catalysed reaction is 1-(5-phospho-beta-D-ribosyl)-5-[(5-phospho-beta-D-ribosylamino)methylideneamino]imidazole-4-carboxamide = 5-[(5-phospho-1-deoxy-D-ribulos-1-ylimino)methylamino]-1-(5-phospho-beta-D-ribosyl)imidazole-4-carboxamide. It participates in amino-acid biosynthesis; L-histidine biosynthesis; L-histidine from 5-phospho-alpha-D-ribose 1-diphosphate: step 4/9. This Jannaschia sp. (strain CCS1) protein is 1-(5-phosphoribosyl)-5-[(5-phosphoribosylamino)methylideneamino] imidazole-4-carboxamide isomerase.